The following is a 355-amino-acid chain: MHC class I-like protein MILL2 (355 aa).

The N-terminal stretch at 1-29 is a signal peptide; it reads MKASSGKPREFRPAVLLLILGLLLRDSRG. The segment at 46–137 is alpha-1; the sequence is RLTRTHTLRY…VINQKSQEEG (92 aa). Intrachain disulfides connect Cys-96-Cys-107, Cys-147-Cys-210, and Cys-249-Cys-306. N-linked (GlcNAc...) asparagine glycosylation is found at Asn-104 and Asn-152. The alpha-2 stretch occupies residues 138–229; that stretch reads LHTLQATLGC…SLRNGLQDTG (92 aa). The segment at 230-323 is alpha-3; sequence PPMVTVTCRN…SIMQTAVSGH (94 aa). An Ig-like C1-type domain is found at 231 to 321; the sequence is PMVTVTCRNY…NHSIMQTAVS (91 aa). Asn-312 is a glycosylation site (N-linked (GlcNAc...) asparagine). The interval 324 to 329 is connecting peptide; it reads AAEDSQ. A lipid anchor (GPI-anchor amidated aspartate) is attached at Asp-330. Residues 331-355 constitute a propeptide, removed in mature form; sequence VASSATASAGSALPVVLAVALARAN.

Belongs to the MHC class I family. In terms of assembly, heterodimer with B2M (beta-2-microglobulin). N-glycosylated. As to expression, ubiquitously expressed in neonatal and adult tissues.

It is found in the cell membrane. Its function is as follows. Binds to heparan sulfate proteoglycans on the surface of fibroblast (NIH-3T3) cells. In Mus musculus (Mouse), this protein is MHC class I-like protein MILL2.